A 603-amino-acid polypeptide reads, in one-letter code: Penicillin-binding protein activator LpoA (603 aa).

A signal peptide spans 1–24; it reads MINHKRLSVPRILTPVALAITLAA. C25 carries N-palmitoyl cysteine lipidation. The S-diacylglycerol cysteine moiety is linked to residue C25.

The protein belongs to the LpoA family. In terms of assembly, interacts with PBP1a.

The protein resides in the cell outer membrane. Functionally, regulator of peptidoglycan synthesis that is essential for the function of penicillin-binding protein 1A (PBP1a). The chain is Penicillin-binding protein activator LpoA from Vibrio antiquarius (strain Ex25).